Reading from the N-terminus, the 262-residue chain is MNFVVIIPVRFFSTRFPGKALADINGKPMIVRVMENALDSGANKVIIATDSSCIARVIESEQSESEVCLTRSTHQSGTERLAEVAINYKFSDDQIIVHLQGDEPLLSSTMIRQVASILCSMSSTISMATLATPLSSFKEARDDNVVKVVINMNSNALYFSRSMIPWNTGDFVNHLDSKFSKTLLRHIGIYAYRVKFLRRYIAWTKSPLEQIEHLEQLRVLWHGEAIHVSVIDDVFNISVDTPESLSRVNTVFKKNKYATVHN.

It belongs to the KdsB family.

The protein localises to the cytoplasm. The catalysed reaction is 3-deoxy-alpha-D-manno-oct-2-ulosonate + CTP = CMP-3-deoxy-beta-D-manno-octulosonate + diphosphate. The protein operates within nucleotide-sugar biosynthesis; CMP-3-deoxy-D-manno-octulosonate biosynthesis; CMP-3-deoxy-D-manno-octulosonate from 3-deoxy-D-manno-octulosonate and CTP: step 1/1. Its pathway is bacterial outer membrane biogenesis; lipopolysaccharide biosynthesis. Activates KDO (a required 8-carbon sugar) for incorporation into bacterial lipopolysaccharide in Gram-negative bacteria. The protein is 3-deoxy-manno-octulosonate cytidylyltransferase of Blochmanniella pennsylvanica (strain BPEN).